The chain runs to 1230 residues: Serine/threonine-protein kinase CST20 (1230 aa).

Residues 1–20 are compositionally biased toward polar residues; sequence MSILSENNPTPTSITDPNKS. Disordered regions lie at residues 1-384 and 413-470; these read MSIL…TAHN and SSLE…HSQE. 2 stretches are compositionally biased toward low complexity: residues 57 to 70 and 96 to 125; these read NTTS…SLGS and SGSG…NPES. Residues 150 to 161 show a composition bias toward basic and acidic residues; that stretch reads HQGDDSDNEKQY. Composition is skewed to polar residues over residues 175–197, 207–224, and 237–246; these read DSYS…NNVS, TSSL…NENA, and PTSKTSSFHD. Low complexity predominate over residues 248–257; sequence SSVISSSTSV. Composition is skewed to polar residues over residues 262 to 277 and 311 to 330; these read SNPT…SYKS and DTLS…TLQG. Low complexity-rich tracts occupy residues 349 to 381 and 439 to 468; these read NTSA…STST and KVRG…NSHS. The 14-residue stretch at 475-488 folds into the CRIB domain; that stretch reads ISTPFNAKHLAHVG. 2 disordered regions span residues 545-831 and 867-919; these read FHFD…ALAD and LREK…KQAA. Polar residues predominate over residues 550 to 561; sequence NKSSSSGWSNEN. Residues 570–581 are compositionally biased toward gly residues; that stretch reads SNSGSGSGGGGA. The span at 604 to 613 shows a compositional bias: polar residues; that stretch reads ITPSQSMPTK. The segment covering 614–628 has biased composition (basic and acidic residues); that stretch reads TESKQSENQHPHEDN. The span at 629-642 shows a compositional bias: polar residues; that stretch reads ATQYTPRTPTSHVQ. 3 stretches are compositionally biased toward low complexity: residues 670–683, 696–710, and 736–749; these read PSSQ…SQSD, SPSK…SKSL, and SIPK…SLSS. The span at 750 to 761 shows a compositional bias: polar residues; the sequence is QLRPATNGSTTA. Residues 789–807 are compositionally biased toward pro residues; the sequence is APPPPPSAPPAPPVPPAPP. A compositionally biased stretch (polar residues) spans 811 to 826; the sequence is LSEQTSEIPQQRTAPS. The segment covering 867–876 has biased composition (basic and acidic residues); that stretch reads LREKNERQNR. The span at 877 to 892 shows a compositional bias: polar residues; the sequence is QQETGQNNADTASGGS. In terms of domain architecture, Protein kinase spans 953-1205; the sequence is YVDLVKIGQG…ADELLHDNFI (253 aa). ATP contacts are provided by residues 959 to 967 and Lys-983; that span reads IGQGASGGV. The active-site Proton acceptor is Asp-1073.

This sequence belongs to the protein kinase superfamily. STE Ser/Thr protein kinase family. STE20 subfamily.

Its subcellular location is the cytoplasm. It localises to the nucleus. It catalyses the reaction L-seryl-[protein] + ATP = O-phospho-L-seryl-[protein] + ADP + H(+). The enzyme catalyses L-threonyl-[protein] + ATP = O-phospho-L-threonyl-[protein] + ADP + H(+). In terms of biological role, MAP4K component of the MAPK pathway required for the mating pheromone response, and the regulation of cell polarity and cell cycle. Phosphorylates histone H2B to form H2BS10ph. Required for hyphal formation and virulence. This chain is Serine/threonine-protein kinase CST20 (CST20), found in Candida albicans (Yeast).